The primary structure comprises 494 residues: MKKMAFDSNKYLQLQRDHILERIHQFDGKLYMEFGGKMLEDYHAARVLPGYEPDNKIKLLKELKDQVEIVITINANNIEHSKARGDLGISYDQEVFRLIDTFHSLDIFVGSVVITQYNNQAAADAFRKQLEKNGITSYLHYPIKGYPTDINHIISPEGMGKNDYIKTSRNLVVVTAPGPGSGKLATCMSQMYHDQINGITSGYAKFETFPVWNLPLHHPVNLAYEAATADLDDVNMIDPFHLETYGKTAVNYNRDIEVFPVLNRTFERILSKSPYASPTDMGVNMVGFSIIDDDLAIEASKQEIIRRYYQTLVDFKAERVPETAIKKIELLMNDIGVSPEDRKVTVLARQKAEQTGAPALALELPNGEMVTGKTSDLFGPTAAVVINAIKKLAHISKETHLIEPEYVKPIQGLKVNHLGSQNPRLHSNEILIALAITAMNNDQAHLAMKELGNLKGSEAHSTVTLTEEDRNVLRKLGVNVTFDPVYQHDKLYRK.

Belongs to the UPF0371 family.

In Streptococcus uberis (strain ATCC BAA-854 / 0140J), this protein is UPF0371 protein SUB1165.